A 182-amino-acid chain; its full sequence is Transcription termination/antitermination protein NusG (182 aa).

It belongs to the NusG family.

In terms of biological role, participates in transcription elongation, termination and antitermination. The chain is Transcription termination/antitermination protein NusG from Chlamydia muridarum (strain MoPn / Nigg).